The following is a 247-amino-acid chain: ATP synthase subunit a, chloroplastic (247 aa).

5 consecutive transmembrane segments (helical) span residues 38–58 (QVLITSWVVITILLGSVIIAV), 95–115 (VPFIGTMFLFIFVSNWSGALL), 134–154 (INTTVALALLTSAAYFYAGLS), 199–219 (LVVVVLVSLVPLVVPIPVMFL), and 220–240 (GLFTSGIQALIFATLAAAYIG).

Belongs to the ATPase A chain family. F-type ATPases have 2 components, CF(1) - the catalytic core - and CF(0) - the membrane proton channel. CF(1) has five subunits: alpha(3), beta(3), gamma(1), delta(1), epsilon(1). CF(0) has four main subunits: a, b, b' and c.

The protein localises to the plastid. It localises to the chloroplast thylakoid membrane. Its function is as follows. Key component of the proton channel; it plays a direct role in the translocation of protons across the membrane. In Oryza nivara (Indian wild rice), this protein is ATP synthase subunit a, chloroplastic.